The sequence spans 276 residues: MDRLHTSSADWPDHLATQVVRVRGGVLQAAGQSDHVAEETPVALEFNGISHATMLVTPTHLDDFALGFALTEGIVGGMADVRGVELETRCDGIVVQVEIATSCEVRLKERRRAMAGRTGCGLCGVETLPEVVRDVAPVADSDALPVHNVLRAMQSLRSRQTLHDATGATHAAGWADASGEVVLAREDVGRHNALDKLIGALARQGIAPLPGMAVVSSRASFEMVQKTASAGIPILAAVSAPTALAIRLARQTNVTLLGFVRNTDATIYSHPQRIAA.

C120 acts as the Cysteine persulfide intermediate in catalysis.

This sequence belongs to the FdhD family.

It localises to the cytoplasm. Its function is as follows. Required for formate dehydrogenase (FDH) activity. Acts as a sulfur carrier protein that transfers sulfur from IscS to the molybdenum cofactor prior to its insertion into FDH. In Bordetella bronchiseptica (strain ATCC BAA-588 / NCTC 13252 / RB50) (Alcaligenes bronchisepticus), this protein is Sulfur carrier protein FdhD.